A 223-amino-acid polypeptide reads, in one-letter code: Ubiquitin carboxyl-terminal hydrolase isozyme L1 (223 aa).

M1 carries the post-translational modification N-acetylmethionine. Positions 2–221 (QLKPMEINPE…VRFSAVALCK (220 aa)) constitute a UCH catalytic domain. The interval 5 to 10 (PMEINP) is interaction with ubiquitin. C90 acts as the Nucleophile in catalysis. A Phosphoserine modification is found at S125. The active-site Proton donor is the H161. Residues 211–216 (EVRFSA) are interaction with ubiquitin. C220 is lipidated: S-farnesyl cysteine. A propeptide spans 221-223 (KAA) (removed in mature form).

Belongs to the peptidase C12 family. As to quaternary structure, monomer. Homodimer. Interacts with COPS5 and SNCA. Post-translationally, O-glycosylated. Expressed in the placenta at all stages of pregnancy. Expression increases as pregnancy progresses.

It is found in the cytoplasm. The protein localises to the endoplasmic reticulum membrane. It localises to the nucleus. It catalyses the reaction Thiol-dependent hydrolysis of ester, thioester, amide, peptide and isopeptide bonds formed by the C-terminal Gly of ubiquitin (a 76-residue protein attached to proteins as an intracellular targeting signal).. Ubiquitin-protein hydrolase involved both in the processing of ubiquitin precursors and of ubiquitinated proteins. This enzyme is a thiol protease that recognizes and hydrolyzes a peptide bond at the C-terminal glycine of ubiquitin. Also binds to free monoubiquitin and may prevent its degradation in lysosomes. The homodimer may have ATP-independent ubiquitin ligase activity. This Macaca fascicularis (Crab-eating macaque) protein is Ubiquitin carboxyl-terminal hydrolase isozyme L1 (UCHL1).